Here is a 216-residue protein sequence, read N- to C-terminus: Octanoyltransferase (216 aa).

The 175-residue stretch at serine 31–glutamine 205 folds into the BPL/LPL catalytic domain. Substrate-binding positions include arginine 70 to histidine 77, serine 137 to glycine 139, and glycine 150 to alanine 152. Cysteine 168 (acyl-thioester intermediate) is an active-site residue.

The protein belongs to the LipB family.

Its subcellular location is the cytoplasm. The enzyme catalyses octanoyl-[ACP] + L-lysyl-[protein] = N(6)-octanoyl-L-lysyl-[protein] + holo-[ACP] + H(+). The protein operates within protein modification; protein lipoylation via endogenous pathway; protein N(6)-(lipoyl)lysine from octanoyl-[acyl-carrier-protein]: step 1/2. In terms of biological role, catalyzes the transfer of endogenously produced octanoic acid from octanoyl-acyl-carrier-protein onto the lipoyl domains of lipoate-dependent enzymes. Lipoyl-ACP can also act as a substrate although octanoyl-ACP is likely to be the physiological substrate. In Vibrio cholerae serotype O1 (strain ATCC 39315 / El Tor Inaba N16961), this protein is Octanoyltransferase.